The following is a 224-amino-acid chain: Inhibitor of apoptosis protein (224 aa).

Residues 29 to 92 form a BIR repeat; that stretch reads VDARNKSFAI…GFWSRNCGFM (64 aa). Zn(2+) is bound by residues cysteine 62, cysteine 65, histidine 82, and cysteine 89. Residues 189–207 form a C4-type zinc finger; that stretch reads CMTCGIEQINKDENFCSAC.

Belongs to the asfivirus IAP family. As to quaternary structure, interacts with subunit p17 of host CASP3.

The protein resides in the host cytoplasm. It is found in the virion. In terms of biological role, prevents apoptosis of host cell by inhibiting caspase-3/CASP3 activation to promote the viral replication. Also induces the activation of host NF-kappaB. This Ornithodoros (relapsing fever ticks) protein is Inhibitor of apoptosis protein.